The chain runs to 246 residues: Chanoclavine-I dehydrogenase easD (246 aa).

The N-terminal stretch at methionine 1 to alanine 20 is a signal peptide. The NADP(+) site is built by isoleucine 18, aspartate 66, arginine 132, tyrosine 169, and lysine 173. Tyrosine 169 (proton donor) is an active-site residue. Residue lysine 173 is the Lowers pKa of active site Tyr of the active site.

Belongs to the short-chain dehydrogenases/reductases (SDR) family. In terms of assembly, homotetramer.

It catalyses the reaction chanoclavine-I + NAD(+) = chanoclavine-I aldehyde + NADH + H(+). It participates in alkaloid biosynthesis; ergot alkaloid biosynthesis. Chanoclavine-I dehydrogenase; part of the gene cluster that mediates the biosynthesis of fungal ergot alkaloid. DmaW catalyzes the first step of ergot alkaloid biosynthesis by condensing dimethylallyl diphosphate (DMAP) and tryptophan to form 4-dimethylallyl-L-tryptophan. The second step is catalyzed by the methyltransferase easF that methylates 4-dimethylallyl-L-tryptophan in the presence of S-adenosyl-L-methionine, resulting in the formation of 4-dimethylallyl-L-abrine. The catalase easC and the FAD-dependent oxidoreductase easE then transform 4-dimethylallyl-L-abrine to chanoclavine-I which is further oxidized by easD in the presence of NAD(+), resulting in the formation of chanoclavine-I aldehyde. Chanoclavine-I aldehyde is the precursor of ergoamides and ergopeptines in Clavicipitaceae, and clavine-type alcaloids such as fumiclavine in Trichocomaceae. However, the metabolites downstream of chanoclavine-I aldehyde in Arthrodermataceae have not been identified yet. This Arthroderma benhamiae (strain ATCC MYA-4681 / CBS 112371) (Trichophyton mentagrophytes) protein is Chanoclavine-I dehydrogenase easD.